The chain runs to 342 residues: Methylthioribose-1-phosphate isomerase (342 aa).

Residues 49–51, R86, and Q187 each bind substrate; that span reads RGA. The Proton donor role is filled by D228. Position 238–239 (238–239) interacts with substrate; that stretch reads NK.

It belongs to the eIF-2B alpha/beta/delta subunits family. MtnA subfamily.

It catalyses the reaction 5-(methylsulfanyl)-alpha-D-ribose 1-phosphate = 5-(methylsulfanyl)-D-ribulose 1-phosphate. Its pathway is amino-acid biosynthesis; L-methionine biosynthesis via salvage pathway; L-methionine from S-methyl-5-thio-alpha-D-ribose 1-phosphate: step 1/6. Catalyzes the interconversion of methylthioribose-1-phosphate (MTR-1-P) into methylthioribulose-1-phosphate (MTRu-1-P). This chain is Methylthioribose-1-phosphate isomerase, found in Citrobacter koseri (strain ATCC BAA-895 / CDC 4225-83 / SGSC4696).